The primary structure comprises 151 residues: Transcriptional regulator MraZ (151 aa).

SpoVT-AbrB domains lie at 5-52 and 81-124; these read ANAI…PLSE and AVDL…DEDA.

It belongs to the MraZ family. In terms of assembly, forms oligomers.

It localises to the cytoplasm. The protein localises to the nucleoid. The polypeptide is Transcriptional regulator MraZ (Pseudomonas savastanoi pv. phaseolicola (strain 1448A / Race 6) (Pseudomonas syringae pv. phaseolicola (strain 1448A / Race 6))).